A 228-amino-acid chain; its full sequence is Triosephosphate isomerase (228 aa).

Asn-12–Lys-14 is a substrate binding site. The Electrophile role is filled by His-96. The Proton acceptor role is filled by Glu-144. Substrate is bound by residues Ile-149, Gly-184, and Ala-205 to Ser-206.

This sequence belongs to the triosephosphate isomerase family. Homotetramer; dimer of dimers.

Its subcellular location is the cytoplasm. The enzyme catalyses D-glyceraldehyde 3-phosphate = dihydroxyacetone phosphate. It functions in the pathway carbohydrate biosynthesis; gluconeogenesis. It participates in carbohydrate degradation; glycolysis; D-glyceraldehyde 3-phosphate from glycerone phosphate: step 1/1. Involved in the gluconeogenesis. Catalyzes stereospecifically the conversion of dihydroxyacetone phosphate (DHAP) to D-glyceraldehyde-3-phosphate (G3P). The polypeptide is Triosephosphate isomerase (Pyrococcus furiosus (strain ATCC 43587 / DSM 3638 / JCM 8422 / Vc1)).